A 99-amino-acid chain; its full sequence is Integration host factor subunit alpha (99 aa).

The tract at residues 49–73 (FGNFDLRDKNQRPGRNPKTGEDIPI) is disordered.

The protein belongs to the bacterial histone-like protein family. As to quaternary structure, heterodimer of an alpha and a beta chain.

Functionally, this protein is one of the two subunits of integration host factor, a specific DNA-binding protein that functions in genetic recombination as well as in transcriptional and translational control. This chain is Integration host factor subunit alpha (ihfA), found in Serratia marcescens.